We begin with the raw amino-acid sequence, 268 residues long: MNPYAQLFSRLDAVNQGAFVPFVMLGDPTPELSLAIVDALVAGGADALELGIPFSDPVADGPTIQGAALRAFESHTTPDDCFELLGRIRAKYPQLPIGLLVYANLVYVRHIDGFYEKCQQAGVDSVLVADVPVQMCAPYKAAADKFGIDSIFIAPPNGDAETLKQVAELGSGYTYLVSRAGVTGAETKAGMPVDGLINTLREFNAPPALLGFGISEPAQVREAIAAGAAGAISGSAVVKIIETHHQNPEHMLTRLKEFVEGMKAATNR.

Catalysis depends on proton acceptor residues Glu49 and Asp60.

It belongs to the TrpA family. In terms of assembly, tetramer of two alpha and two beta chains.

It catalyses the reaction (1S,2R)-1-C-(indol-3-yl)glycerol 3-phosphate + L-serine = D-glyceraldehyde 3-phosphate + L-tryptophan + H2O. It participates in amino-acid biosynthesis; L-tryptophan biosynthesis; L-tryptophan from chorismate: step 5/5. Functionally, the alpha subunit is responsible for the aldol cleavage of indoleglycerol phosphate to indole and glyceraldehyde 3-phosphate. The sequence is that of Tryptophan synthase alpha chain from Aeromonas salmonicida (strain A449).